The following is a 419-amino-acid chain: UDP-N-acetylglucosamine 1-carboxyvinyltransferase (419 aa).

Phosphoenolpyruvate is bound at residue 22–23; it reads KN. UDP-N-acetyl-alpha-D-glucosamine is bound at residue Arg-93. Cys-117 acts as the Proton donor in catalysis. Cys-117 is modified (2-(S-cysteinyl)pyruvic acid O-phosphothioketal). UDP-N-acetyl-alpha-D-glucosamine contacts are provided by Asp-306 and Val-328.

Belongs to the EPSP synthase family. MurA subfamily.

It localises to the cytoplasm. The enzyme catalyses phosphoenolpyruvate + UDP-N-acetyl-alpha-D-glucosamine = UDP-N-acetyl-3-O-(1-carboxyvinyl)-alpha-D-glucosamine + phosphate. The protein operates within cell wall biogenesis; peptidoglycan biosynthesis. In terms of biological role, cell wall formation. Adds enolpyruvyl to UDP-N-acetylglucosamine. This Thioalkalivibrio sulfidiphilus (strain HL-EbGR7) protein is UDP-N-acetylglucosamine 1-carboxyvinyltransferase.